Consider the following 435-residue polypeptide: Adenylosuccinate synthetase (435 aa).

GTP-binding positions include 19 to 25 and 49 to 51; these read GDEGKGK and GHT. Asp-20 (proton acceptor) is an active-site residue. Positions 20 and 49 each coordinate Mg(2+). Residues 20-23, 47-50, Thr-139, Arg-153, Asn-233, Thr-248, and Arg-312 contribute to the IMP site; these read DEGK and NAGH. His-50 serves as the catalytic Proton donor. Residue 308–314 coordinates substrate; it reads VTTGRKR. GTP-binding positions include Arg-314, 340–342, and 422–424; these read KLD and GVG.

The protein belongs to the adenylosuccinate synthetase family. As to quaternary structure, homodimer. Mg(2+) serves as cofactor.

Its subcellular location is the cytoplasm. It carries out the reaction IMP + L-aspartate + GTP = N(6)-(1,2-dicarboxyethyl)-AMP + GDP + phosphate + 2 H(+). It functions in the pathway purine metabolism; AMP biosynthesis via de novo pathway; AMP from IMP: step 1/2. Plays an important role in the de novo pathway and in the salvage pathway of purine nucleotide biosynthesis. Catalyzes the first committed step in the biosynthesis of AMP from IMP. The polypeptide is Adenylosuccinate synthetase (Brugia malayi (Filarial nematode worm)).